A 984-amino-acid polypeptide reads, in one-letter code: Translation initiation factor IF-2 (984 aa).

Residues 32–402 (PAKNATSTLT…TQPQRAAKRK (371 aa)) are disordered. Over residues 89-123 (PAETEAQASPAQPEAKAAAPAAEAEEAPAAKPAPA) the composition is skewed to low complexity. Positions 126–136 (RKAEARTEAPR) are enriched in basic and acidic residues. Composition is skewed to low complexity over residues 154 to 172 (APET…SAAP) and 187 to 197 (AETTESAPAEP). Over residues 198 to 220 (AAEKAPAEKRRYEVSMEPEKDSV) the composition is skewed to basic and acidic residues. The segment covering 255–270 (RPDPAAVQAQAAAAAQ) has biased composition (low complexity). Basic and acidic residues predominate over residues 271–283 (AREERAERPDRGP). The segment covering 308–334 (GRPAPRSGAPRPGGARPAAGFGQPAQA) has biased composition (low complexity). Positions 482–651 (PRPPVVTIMG…ALQAEVLELK (170 aa)) constitute a tr-type G domain. Positions 491-498 (GHVDHGKT) are G1. 491–498 (GHVDHGKT) contributes to the GTP binding site. The tract at residues 516–520 (GITQH) is G2. Residues 537–540 (DTPG) form a G3 region. Residues 537-541 (DTPGH) and 591-594 (NKID) each bind GTP. Residues 591–594 (NKID) are G4. The segment at 627–629 (SAK) is G5.

The protein belongs to the TRAFAC class translation factor GTPase superfamily. Classic translation factor GTPase family. IF-2 subfamily.

It localises to the cytoplasm. Functionally, one of the essential components for the initiation of protein synthesis. Protects formylmethionyl-tRNA from spontaneous hydrolysis and promotes its binding to the 30S ribosomal subunits. Also involved in the hydrolysis of GTP during the formation of the 70S ribosomal complex. The polypeptide is Translation initiation factor IF-2 (Oleidesulfovibrio alaskensis (strain ATCC BAA-1058 / DSM 17464 / G20) (Desulfovibrio alaskensis)).